The following is a 122-amino-acid chain: MSTLSRKQQTQKRHRRLRRHLSGTANRPRLAVFRSNSHIYAQLIDDEAQSTLCSASTLDKDLRSSLKTNCSSCDASVAVGDLVAKRAIAKGIQQVVFDRGGNLYHGRVKALADAAREAGLQF.

Residues 1-25 are disordered; sequence MSTLSRKQQTQKRHRRLRRHLSGTA. A compositionally biased stretch (basic residues) spans 9–21; sequence QTQKRHRRLRRHL.

It belongs to the universal ribosomal protein uL18 family. As to quaternary structure, part of the 50S ribosomal subunit; part of the 5S rRNA/L5/L18/L25 subcomplex. Contacts the 5S and 23S rRNAs.

This is one of the proteins that bind and probably mediate the attachment of the 5S RNA into the large ribosomal subunit, where it forms part of the central protuberance. This chain is Large ribosomal subunit protein uL18, found in Synechococcus sp. (strain CC9311).